The primary structure comprises 688 residues: Probable glucan endo-1,3-beta-glucosidase btgC (688 aa).

Disordered stretches follow at residues 1 to 49 (MSGP…MNGQ), 61 to 91 (DGRQGWGRSPEPSPSLLTGSSATPGMDNLGP), and 169 to 194 (QLTPGQSVSHLSSTNPSQRNLYDIPY). Over 1–307 (MSGPNRTYSF…PKPGGGNKKR (307 aa)) the chain is Cytoplasmic. The segment covering 175 to 188 (SVSHLSSTNPSQRN) has biased composition (polar residues). A helical; Signal-anchor for type II membrane protein membrane pass occupies residues 308-328 (GWIVGAILAFIIIGAIVGGAV). At 329 to 688 (GGTIGHRGNE…IPDCGGKTAT (360 aa)) the chain is on the extracellular side. The disordered stretch occupies residues 334-363 (HRGNEEPSSASSASSSSTQTATEDTSVNGD). The span at 341–355 (SSASSASSSSTQTAT) shows a compositional bias: low complexity. Residues N408, N431, and N459 are each glycosylated (N-linked (GlcNAc...) asparagine). E491 (proton donor) is an active-site residue. The Nucleophile role is filled by E590. N609 and N635 each carry an N-linked (GlcNAc...) asparagine glycan.

The protein belongs to the glycosyl hydrolase 17 family.

Its subcellular location is the cell membrane. It carries out the reaction Hydrolysis of (1-&gt;3)-beta-D-glucosidic linkages in (1-&gt;3)-beta-D-glucans.. Glucanases play a role in cell expansion during growth, in cell-cell fusion during mating, and in spore release during sporulation. This enzyme may be involved in beta-glucan degradation. Active on laminarin and lichenan. This is Probable glucan endo-1,3-beta-glucosidase btgC (btgC) from Aspergillus fumigatus (strain CBS 144.89 / FGSC A1163 / CEA10) (Neosartorya fumigata).